The following is a 191-amino-acid chain: Peptidyl-tRNA hydrolase (191 aa).

Y15 contributes to the tRNA binding site. Catalysis depends on H20, which acts as the Proton acceptor. TRNA contacts are provided by F66, N68, and N114.

This sequence belongs to the PTH family. Monomer.

It localises to the cytoplasm. It carries out the reaction an N-acyl-L-alpha-aminoacyl-tRNA + H2O = an N-acyl-L-amino acid + a tRNA + H(+). In terms of biological role, hydrolyzes ribosome-free peptidyl-tRNAs (with 1 or more amino acids incorporated), which drop off the ribosome during protein synthesis, or as a result of ribosome stalling. Catalyzes the release of premature peptidyl moieties from peptidyl-tRNA molecules trapped in stalled 50S ribosomal subunits, and thus maintains levels of free tRNAs and 50S ribosomes. This chain is Peptidyl-tRNA hydrolase, found in Streptococcus agalactiae serotype Ia (strain ATCC 27591 / A909 / CDC SS700).